Here is a 22-residue protein sequence, read N- to C-terminus: Myofibril-bound serine protease (22 aa).

The 22-residue stretch at 1–22 (IVGGYECEAYSKPYQVSINLGY) folds into the Peptidase S1 domain.

It belongs to the peptidase S1 family. In terms of tissue distribution, detected in skeletal muscle (at protein level).

It localises to the cytoplasm. Functionally, serine protease which degrades the myosin heavy chain and tropomyosin, but not actin. Selectively cleaves Arg-|-Xaa bonds. The protein is Myofibril-bound serine protease of Saurida undosquamis (Brushtooth lizardfish).